The chain runs to 428 residues: Adenylosuccinate synthetase (428 aa).

Residues 12–18 and 40–42 each bind GTP; these read GDEGKGK and GHT. Asp13 (proton acceptor) is an active-site residue. Mg(2+) contacts are provided by Asp13 and Gly40. Residues 13-16, 38-41, Thr130, Arg144, Gln225, Thr240, and Arg304 each bind IMP; these read DEGK and NAGH. His41 serves as the catalytic Proton donor. 300–306 serves as a coordination point for substrate; the sequence is ATTGRPR. Residues Arg306, 332–334, and 415–417 each bind GTP; these read KLD and SVG.

The protein belongs to the adenylosuccinate synthetase family. Homodimer. The cofactor is Mg(2+).

The protein resides in the cytoplasm. It catalyses the reaction IMP + L-aspartate + GTP = N(6)-(1,2-dicarboxyethyl)-AMP + GDP + phosphate + 2 H(+). The protein operates within purine metabolism; AMP biosynthesis via de novo pathway; AMP from IMP: step 1/2. In terms of biological role, plays an important role in the de novo pathway of purine nucleotide biosynthesis. Catalyzes the first committed step in the biosynthesis of AMP from IMP. In Lawsonia intracellularis (strain PHE/MN1-00), this protein is Adenylosuccinate synthetase.